Reading from the N-terminus, the 837-residue chain is Leucine-zipper-like transcriptional regulator 1 (837 aa).

Residue Ala2 is modified to N-acetylalanine. 6 Kelch repeats span residues Ala76–Ser125, Met127–Asp182, Leu184–Asp235, Lys236–Tyr282, His292–Ala338, and Ala396–Gly447. Residues Ser324 to Arg352 are disordered. 2 consecutive BTB domains span residues Cys440 to Arg534 and Cys664 to Pro733.

Belongs to the LZTR1 family. As to quaternary structure, homodimer. Component of the BCR(LZTR1) E3 ubiquitin ligase complex, at least composed of CUL3, LZTR1 and RBX1. Interacts with Ras (K-Ras/KRAS, N-Ras/NRAS and H-Ras/HRAS). Interacts with RAF1. Interacts with SHOC2. Interacts with PPP1CB. In terms of processing, phosphorylated on tyrosine upon induction of apoptosis, leading to its degradation by the proteasome. Widely expressed.

The protein localises to the endomembrane system. The protein resides in the recycling endosome. It localises to the golgi apparatus. The protein operates within protein modification; protein ubiquitination. Its function is as follows. Substrate-specific adapter of a BCR (BTB-CUL3-RBX1) E3 ubiquitin-protein ligase complex that mediates ubiquitination of Ras (K-Ras/KRAS, N-Ras/NRAS and H-Ras/HRAS). Is a negative regulator of RAS-MAPK signaling that acts by controlling Ras levels and decreasing Ras association with membranes. The polypeptide is Leucine-zipper-like transcriptional regulator 1 (Mus musculus (Mouse)).